The following is a 957-amino-acid chain: Glycine dehydrogenase (decarboxylating) (957 aa).

Residue Lys-708 is modified to N6-(pyridoxal phosphate)lysine.

This sequence belongs to the GcvP family. The glycine cleavage system is composed of four proteins: P, T, L and H. It depends on pyridoxal 5'-phosphate as a cofactor.

The catalysed reaction is N(6)-[(R)-lipoyl]-L-lysyl-[glycine-cleavage complex H protein] + glycine + H(+) = N(6)-[(R)-S(8)-aminomethyldihydrolipoyl]-L-lysyl-[glycine-cleavage complex H protein] + CO2. In terms of biological role, the glycine cleavage system catalyzes the degradation of glycine. The P protein binds the alpha-amino group of glycine through its pyridoxal phosphate cofactor; CO(2) is released and the remaining methylamine moiety is then transferred to the lipoamide cofactor of the H protein. The sequence is that of Glycine dehydrogenase (decarboxylating) from Escherichia coli O6:H1 (strain CFT073 / ATCC 700928 / UPEC).